The chain runs to 235 residues: MYALSEKGERIRAMFGSIAPRYDLLNRLLSLGIDRRWRRFAVKKIGLNGSGRVLDVATGTGDVALEIASQTPASVSIVGIDFTPEMIELGRVKVKDSRHCGRITLQVAPCEEIPFDDGSFDAATISFGIRNVVDRIKGLAEMHRVLKNDGKIVILEFSTPTLPVFKDLYHFYFLKVLPKIGGAFSRFSAYQYLPDSVLEFPSREVFKGMMTQVGFKDVRHFDLTGGIATVYVGTK.

S-adenosyl-L-methionine-binding residues include Thr-60, Asp-81, and Ser-126.

This sequence belongs to the class I-like SAM-binding methyltransferase superfamily. MenG/UbiE family.

The enzyme catalyses a 2-demethylmenaquinol + S-adenosyl-L-methionine = a menaquinol + S-adenosyl-L-homocysteine + H(+). It catalyses the reaction a 2-methoxy-6-(all-trans-polyprenyl)benzene-1,4-diol + S-adenosyl-L-methionine = a 5-methoxy-2-methyl-3-(all-trans-polyprenyl)benzene-1,4-diol + S-adenosyl-L-homocysteine + H(+). It participates in quinol/quinone metabolism; menaquinone biosynthesis; menaquinol from 1,4-dihydroxy-2-naphthoate: step 2/2. Its pathway is cofactor biosynthesis; ubiquinone biosynthesis. Its function is as follows. Methyltransferase required for the conversion of demethylmenaquinol (DMKH2) to menaquinol (MKH2) and the conversion of 2-polyprenyl-6-methoxy-1,4-benzoquinol (DDMQH2) to 2-polyprenyl-3-methyl-6-methoxy-1,4-benzoquinol (DMQH2). In Citrifermentans bemidjiense (strain ATCC BAA-1014 / DSM 16622 / JCM 12645 / Bem) (Geobacter bemidjiensis), this protein is Ubiquinone/menaquinone biosynthesis C-methyltransferase UbiE.